The chain runs to 123 residues: Large ribosomal subunit protein bL19 (123 aa).

The protein belongs to the bacterial ribosomal protein bL19 family.

Its function is as follows. This protein is located at the 30S-50S ribosomal subunit interface and may play a role in the structure and function of the aminoacyl-tRNA binding site. This is Large ribosomal subunit protein bL19 from Ureaplasma urealyticum serovar 10 (strain ATCC 33699 / Western).